A 219-amino-acid polypeptide reads, in one-letter code: ATP-dependent Clp protease proteolytic subunit 1, mitochondrial (219 aa).

The N-terminal 23 residues, Met-1–Gly-23, are a transit peptide targeting the mitochondrion. Ser-118 functions as the Nucleophile in the catalytic mechanism. His-143 is an active-site residue.

Belongs to the peptidase S14 family. In terms of assembly, tetradecamer that assembles into a two heptameric rings with a central cavity.

The protein localises to the mitochondrion matrix. The catalysed reaction is Hydrolysis of proteins to small peptides in the presence of ATP and magnesium. alpha-casein is the usual test substrate. In the absence of ATP, only oligopeptides shorter than five residues are hydrolyzed (such as succinyl-Leu-Tyr-|-NHMec, and Leu-Tyr-Leu-|-Tyr-Trp, in which cleavage of the -Tyr-|-Leu- and -Tyr-|-Trp bonds also occurs).. In terms of biological role, clp cleaves peptides in various proteins in a process that requires ATP hydrolysis. Clp may be responsible for a fairly general and central housekeeping function rather than for the degradation of specific substrates. This chain is ATP-dependent Clp protease proteolytic subunit 1, mitochondrial, found in Caenorhabditis briggsae.